The sequence spans 63 residues: Conotoxin LeDr243 (63 aa).

Positions 1 to 22 are cleaved as a signal peptide; that stretch reads MRCLPVFVILLLLIASTPSIDA. Positions 23–47 are excised as a propeptide; that stretch reads RPKTKDDMPLASFNDNAKRILQILS. Residue Cys-60 is modified to Cysteine amide. Residues 62-63 constitute a propeptide that is removed on maturation; it reads LG.

Belongs to the conotoxin T superfamily. Post-translationally, contains 2 disulfide bonds that can be either 'C1-C3, C2-C4' or 'C1-C4, C2-C3', since these disulfide connectivities have been observed for conotoxins with cysteine framework V (for examples, see AC P0DQQ7 and AC P81755). As to expression, expressed by the venom duct.

It is found in the secreted. The sequence is that of Conotoxin LeDr243 from Conus litteratus (Lettered cone).